The chain runs to 357 residues: Histidinol-phosphate aminotransferase 1 (357 aa).

K217 bears the N6-(pyridoxal phosphate)lysine mark.

Belongs to the class-II pyridoxal-phosphate-dependent aminotransferase family. Histidinol-phosphate aminotransferase subfamily. In terms of assembly, homodimer. The cofactor is pyridoxal 5'-phosphate.

It catalyses the reaction L-histidinol phosphate + 2-oxoglutarate = 3-(imidazol-4-yl)-2-oxopropyl phosphate + L-glutamate. The protein operates within amino-acid biosynthesis; L-histidine biosynthesis; L-histidine from 5-phospho-alpha-D-ribose 1-diphosphate: step 7/9. The polypeptide is Histidinol-phosphate aminotransferase 1 (Burkholderia lata (strain ATCC 17760 / DSM 23089 / LMG 22485 / NCIMB 9086 / R18194 / 383)).